The primary structure comprises 466 residues: Pentatricopeptide repeat-containing protein At4g01400, mitochondrial (466 aa).

The transit peptide at 1-34 (MIRRPIYDFAAVFRHLTSPLSTSSRFLFYSSSEH) directs the protein to the mitochondrion. 8 PPR repeats span residues 118 to 152 (TGEIFTYLIKVYAEAKLPEKVLSTFYKMLEFNFTP), 153 to 188 (QPKHLNRILDVLVSHRGYLQKAFELFKSSRLHGVMP), 189 to 223 (NTRSYNLLMQAFCLNDDLSIAYQLFGKMLERDVVP), 224 to 258 (DVDSYKILIQGFCRKGQVNGAMELLDDMLNKGFVP), 259 to 293 (DRLSYTTLLNSLCRKTQLREAYKLLCRMKLKGCNP), 294 to 328 (DLVHYNTMILGFCREDRAMDARKVLDDMLSNGCSP), 329 to 363 (NSVSYRTLIGGLCDQGMFDEGKKYLEEMISKGFSP), and 364 to 398 (HFSVSNCLVKGFCSFGKVEEACDVVEVVMKNGETL).

It belongs to the PPR family. P subfamily.

It localises to the mitochondrion. The chain is Pentatricopeptide repeat-containing protein At4g01400, mitochondrial from Arabidopsis thaliana (Mouse-ear cress).